Consider the following 631-residue polypeptide: Phosphomethylpyrimidine synthase (631 aa).

Substrate-binding positions include N239, M268, Y297, H333, 353–355 (SRG), 394–397 (DGLR), and E433. A Zn(2+)-binding site is contributed by H437. Y460 contributes to the substrate binding site. H501 is a Zn(2+) binding site. C581, C584, and C589 together coordinate [4Fe-4S] cluster.

The protein belongs to the ThiC family. Homodimer. The cofactor is [4Fe-4S] cluster.

The catalysed reaction is 5-amino-1-(5-phospho-beta-D-ribosyl)imidazole + S-adenosyl-L-methionine = 4-amino-2-methyl-5-(phosphooxymethyl)pyrimidine + CO + 5'-deoxyadenosine + formate + L-methionine + 3 H(+). Its pathway is cofactor biosynthesis; thiamine diphosphate biosynthesis. Its function is as follows. Catalyzes the synthesis of the hydroxymethylpyrimidine phosphate (HMP-P) moiety of thiamine from aminoimidazole ribotide (AIR) in a radical S-adenosyl-L-methionine (SAM)-dependent reaction. In Escherichia coli (strain 55989 / EAEC), this protein is Phosphomethylpyrimidine synthase.